A 98-amino-acid chain; its full sequence is Large ribosomal subunit protein uL23 (98 aa).

Belongs to the universal ribosomal protein uL23 family. Part of the 50S ribosomal subunit. Contacts protein L29, and trigger factor when it is bound to the ribosome.

In terms of biological role, one of the early assembly proteins it binds 23S rRNA. One of the proteins that surrounds the polypeptide exit tunnel on the outside of the ribosome. Forms the main docking site for trigger factor binding to the ribosome. This chain is Large ribosomal subunit protein uL23, found in Lactobacillus gasseri (strain ATCC 33323 / DSM 20243 / BCRC 14619 / CIP 102991 / JCM 1131 / KCTC 3163 / NCIMB 11718 / NCTC 13722 / AM63).